A 61-amino-acid chain; its full sequence is MAKDIITGRKTVFGNKRSKALNSVRRSWKPNLQKVRILVDGKPKRVWVSARALKSGKVKRV.

Belongs to the bacterial ribosomal protein bL28 family.

This Lactobacillus johnsonii (strain CNCM I-12250 / La1 / NCC 533) protein is Large ribosomal subunit protein bL28.